The sequence spans 101 residues: Apolipoprotein C-II (101 aa).

Positions 1-26 (MGTRYFLALFLILLVLGFKVQGVAMA) are cleaved as a signal peptide. Residues 66-74 (TMDEKIRDI) form a lipid binding region. A lipoprotein lipase cofactor region spans residues 78–101 (STAAVTTYAGIFTDQLLSLLKGDQ).

It belongs to the apolipoprotein C2 family. Post-translationally, proapolipoprotein C-II is synthesized as a sialic acid containing glycoprotein which is subsequently desialylated prior to its proteolytic processing. Proapolipoprotein C-II undergoes proteolytic cleavage of its N-terminal hexapeptide to generate apolipoprotein C-II. In bovine, proapolipoprotein C-II was found to be the minor form whereas apolipoprotein C-II was found to be the major form in plasma.

The protein resides in the secreted. Its function is as follows. Component of chylomicrons, very low-density lipoproteins (VLDL), low-density lipoproteins (LDL), and high-density lipoproteins (HDL) in plasma. Plays an important role in lipoprotein metabolism as an activator of lipoprotein lipase. Both proapolipoprotein C-II and apolipoprotein C-II can activate lipoprotein lipase. This is Apolipoprotein C-II (APOC2) from Camelus dromedarius (Dromedary).